The sequence spans 210 residues: RNA chaperone ProQ (210 aa).

A disordered region spans residues 118-146 (KAAKPEKKRPARRVAAKGQHAKETTTNKA). Residues 123–132 (EKKRPARRVA) are compositionally biased toward basic residues.

It belongs to the ProQ family.

The protein resides in the cytoplasm. In terms of biological role, RNA chaperone with significant RNA binding, RNA strand exchange and RNA duplexing activities. This chain is RNA chaperone ProQ, found in Pasteurella multocida (strain Pm70).